We begin with the raw amino-acid sequence, 359 residues long: DNA polymerase IV (359 aa).

Positions 4 to 184 constitute a UmuC domain; it reads IVHVDMDAFY…LPVNRIPGVG (181 aa). Mg(2+) contacts are provided by Asp8 and Asp102. Glu103 is an active-site residue.

Belongs to the DNA polymerase type-Y family. Monomer. The cofactor is Mg(2+).

It is found in the cytoplasm. It catalyses the reaction DNA(n) + a 2'-deoxyribonucleoside 5'-triphosphate = DNA(n+1) + diphosphate. In terms of biological role, poorly processive, error-prone DNA polymerase involved in untargeted mutagenesis. Copies undamaged DNA at stalled replication forks, which arise in vivo from mismatched or misaligned primer ends. These misaligned primers can be extended by PolIV. Exhibits no 3'-5' exonuclease (proofreading) activity. May be involved in translesional synthesis, in conjunction with the beta clamp from PolIII. The sequence is that of DNA polymerase IV from Xanthomonas campestris pv. campestris (strain 8004).